The sequence spans 207 residues: Ribosomal RNA large subunit methyltransferase E (207 aa).

The S-adenosyl-L-methionine site is built by Gly60, Trp62, Asp80, Asp96, and Asp121. Residue Lys161 is the Proton acceptor of the active site.

It belongs to the class I-like SAM-binding methyltransferase superfamily. RNA methyltransferase RlmE family.

It localises to the cytoplasm. It carries out the reaction uridine(2552) in 23S rRNA + S-adenosyl-L-methionine = 2'-O-methyluridine(2552) in 23S rRNA + S-adenosyl-L-homocysteine + H(+). Its function is as follows. Specifically methylates the uridine in position 2552 of 23S rRNA at the 2'-O position of the ribose in the fully assembled 50S ribosomal subunit. The protein is Ribosomal RNA large subunit methyltransferase E of Thioalkalivibrio sulfidiphilus (strain HL-EbGR7).